The primary structure comprises 459 residues: Cysteine--tRNA ligase (459 aa).

Cys-28 provides a ligand contact to Zn(2+). Positions 30–40 match the 'HIGH' region motif; sequence VTIYDLCHIGH. Residues Cys-209, His-234, and Glu-238 each contribute to the Zn(2+) site. The short motif at 266–270 is the 'KMSKS' region element; it reads KMSKS. Lys-269 serves as a coordination point for ATP.

Belongs to the class-I aminoacyl-tRNA synthetase family. As to quaternary structure, monomer. Zn(2+) is required as a cofactor.

Its subcellular location is the cytoplasm. It catalyses the reaction tRNA(Cys) + L-cysteine + ATP = L-cysteinyl-tRNA(Cys) + AMP + diphosphate. The polypeptide is Cysteine--tRNA ligase (Shewanella pealeana (strain ATCC 700345 / ANG-SQ1)).